Reading from the N-terminus, the 641-residue chain is Tetracycline resistance protein TetQ (641 aa).

Residues 1–244 (MNIINLGILA…AITSFILPPA (244 aa)) form the tr-type G domain. Residues 10-17 (AHIDAGKT), 74-78 (DTPGH), and 128-131 (NKID) contribute to the GTP site.

The protein belongs to the TRAFAC class translation factor GTPase superfamily. Classic translation factor GTPase family. TetM/TetO subfamily.

Abolishes the inhibitory effect of tetracyclin on protein synthesis by a non-covalent modification of the ribosomes. In Xylanibacter ruminicola (Prevotella ruminicola), this protein is Tetracycline resistance protein TetQ (tetQ).